Reading from the N-terminus, the 425-residue chain is Light-independent protochlorophyllide reductase subunit N (425 aa).

The [4Fe-4S] cluster site is built by cysteine 17, cysteine 42, and cysteine 103.

It belongs to the BchN/ChlN family. Protochlorophyllide reductase is composed of three subunits; ChlL, ChlN and ChlB. Forms a heterotetramer of two ChlB and two ChlN subunits. Requires [4Fe-4S] cluster as cofactor.

It carries out the reaction chlorophyllide a + oxidized 2[4Fe-4S]-[ferredoxin] + 2 ADP + 2 phosphate = protochlorophyllide a + reduced 2[4Fe-4S]-[ferredoxin] + 2 ATP + 2 H2O. It participates in porphyrin-containing compound metabolism; chlorophyll biosynthesis (light-independent). In terms of biological role, component of the dark-operative protochlorophyllide reductase (DPOR) that uses Mg-ATP and reduced ferredoxin to reduce ring D of protochlorophyllide (Pchlide) to form chlorophyllide a (Chlide). This reaction is light-independent. The NB-protein (ChlN-ChlB) is the catalytic component of the complex. This chain is Light-independent protochlorophyllide reductase subunit N, found in Parasynechococcus marenigrum (strain WH8102).